Reading from the N-terminus, the 23-residue chain is Phospholipase A1 verutoxin-1 (23 aa).

It belongs to the AB hydrolase superfamily. Lipase family. Contains six disulfide bonds. Expressed by the venom gland.

The protein localises to the secreted. The catalysed reaction is a 1,2-diacyl-sn-glycero-3-phosphocholine + H2O = a 2-acyl-sn-glycero-3-phosphocholine + a fatty acid + H(+). It catalyses the reaction 1-(9Z-octadecenoyl)-2-hexadecanoyl-sn-glycero-3-phosphocholine + H2O = 2-hexadecanoyl-sn-glycero-3-phosphocholine + (9Z)-octadecenoate + H(+). It carries out the reaction a 1-acyl-sn-glycero-3-phosphocholine + H2O = sn-glycerol 3-phosphocholine + a fatty acid + H(+). It participates in phospholipid metabolism. With respect to regulation, activity is maximal in the presence of calcium. However, unlike phospholipases A2 whose catalytic activity is strictly calcium-dependent, this enzyme shows considerable catalytic activity on phosphatidylcholine emulsified in calcium free solution; the catalytic activity of VT-1 assayed in the absence of calcium ions is 18-20% of that assayed in solution containing calcium ions. Functionally, catalyzes the hydrolysis of glycerophospholipids such as phosphatidylcholine (1,2-diacyl-sn-glycero-3-phosphocholine) and has a moderate activity to hydrolyze lysoglycerophospholipids such as lysophosphatidylcholine (1-acyl-sn-glycero-3-phosphocholine), but is unable to hydrolyze sphingomyelin. Liberates the fatty acid from the sn-1 position of 1,2-diacyl-sn-glycero-3-phosphocholine mainly, indicating phospholipase activity of the A1 type. In addition to acting as an allergen, it possesses a moderate hemolytic activity on red blood cells of mice (3% of hemolysis at 3.0 ug/ml). The chain is Phospholipase A1 verutoxin-1 from Vespa velutina (Asian yellow-legged hornet).